We begin with the raw amino-acid sequence, 305 residues long: Elongation factor Ts (305 aa).

The involved in Mg(2+) ion dislocation from EF-Tu stretch occupies residues 79 to 82; it reads TDFV.

Belongs to the EF-Ts family.

It is found in the cytoplasm. Associates with the EF-Tu.GDP complex and induces the exchange of GDP to GTP. It remains bound to the aminoacyl-tRNA.EF-Tu.GTP complex up to the GTP hydrolysis stage on the ribosome. In Brucella suis biovar 1 (strain 1330), this protein is Elongation factor Ts.